A 249-amino-acid chain; its full sequence is Diaminopimelate epimerase (249 aa).

2 residues coordinate substrate: Asn11 and Asn60. Cys69 (proton donor) is an active-site residue. Residues 70 to 71 (GN), Asn164, and 182 to 183 (ER) each bind substrate. Cys192 acts as the Proton acceptor in catalysis. Residue 193-194 (GT) participates in substrate binding.

The protein belongs to the diaminopimelate epimerase family. In terms of assembly, homodimer.

The protein resides in the cytoplasm. It catalyses the reaction (2S,6S)-2,6-diaminopimelate = meso-2,6-diaminopimelate. The protein operates within amino-acid biosynthesis; L-lysine biosynthesis via DAP pathway; DL-2,6-diaminopimelate from LL-2,6-diaminopimelate: step 1/1. Functionally, catalyzes the stereoinversion of LL-2,6-diaminopimelate (L,L-DAP) to meso-diaminopimelate (meso-DAP), a precursor of L-lysine and an essential component of the bacterial peptidoglycan. The chain is Diaminopimelate epimerase from Campylobacter jejuni subsp. jejuni serotype O:6 (strain 81116 / NCTC 11828).